The primary structure comprises 344 residues: Putative transport protein sll0060 (344 aa).

Transmembrane regions (helical) follow at residues 14–34 (LWIGLTLPLCLLNGWVLLQIL), 41–61 (LRIFIIANLVAFILGYPVRWL), 72–92 (AVALVLLTTAIILAVIGLLVI), 155–175 (LINLLIWTAGSLVEAGFIFIM), 215–235 (IGQATVAALLGVSLIISLSIF), 237–257 (VPLALLFGMFVGFMAFFPFGG), 262–282 (VLISIIASFQSIWLGIKVLAI), and 310–330 (ILLSLMIGAKVAGLLGILVAI).

Belongs to the autoinducer-2 exporter (AI-2E) (TC 2.A.86) family.

It is found in the cell membrane. This Synechocystis sp. (strain ATCC 27184 / PCC 6803 / Kazusa) protein is Putative transport protein sll0060.